Here is a 202-residue protein sequence, read N- to C-terminus: Small ribosomal subunit protein uS4 (202 aa).

A disordered region spans residues 22-43 (TRKSARRAYPPGQHGQNRKKRS). One can recognise an S4 RNA-binding domain in the interval 90 to 152 (MRLDNTVFRL…APSRKLVENN (63 aa)).

It belongs to the universal ribosomal protein uS4 family. In terms of assembly, part of the 30S ribosomal subunit. Contacts protein S5. The interaction surface between S4 and S5 is involved in control of translational fidelity.

Its function is as follows. One of the primary rRNA binding proteins, it binds directly to 16S rRNA where it nucleates assembly of the body of the 30S subunit. In terms of biological role, with S5 and S12 plays an important role in translational accuracy. In Nostoc sp. (strain PCC 7120 / SAG 25.82 / UTEX 2576), this protein is Small ribosomal subunit protein uS4.